Consider the following 655-residue polypeptide: Peroxidase skpo-1 (655 aa).

The first 19 residues, 1 to 19 (MKSLLFSILLIYLIQLVRS), serve as a signal peptide directing secretion. The 35-residue stretch at 22–56 (CTDKHIHCFFWSQEGECEVNPRWMKKHCQKACGTC) folds into the ShKT domain. Cystine bridges form between Cys-22-Cys-56, Cys-29-Cys-49, Cys-38-Cys-53, and Cys-133-Cys-150. Residue His-222 is the Proton acceptor of the active site. Position 428 (His-428) interacts with heme b. Cystine bridges form between Cys-520–Cys-576 and Cys-617–Cys-642.

Belongs to the peroxidase family. XPO subfamily. It depends on heme b as a cofactor. Exclusively expressed in hypodermis.

The catalysed reaction is 2 a phenolic donor + H2O2 = 2 a phenolic radical donor + 2 H2O. Its function is as follows. Involved in hypodermal immune response against some types of bacterial infection. Probably utilizes H(2)O(2) produced by the NADPH oxidase bli-3. May play a role in cuticule biosynthesis. The chain is Peroxidase skpo-1 from Caenorhabditis elegans.